The primary structure comprises 1264 residues: BRCA2-interacting transcriptional repressor EMSY (1264 aa).

The interaction with BRCA2 stretch occupies residues 1–442 (MPVVWPTLLD…LPKPVTATLP (442 aa)). The 99-residue stretch at 16 to 114 (CKRILRKLEL…EWSIEGRRLV (99 aa)) folds into the ENT domain. Residues 118–122 (PRLVP) form an interaction with ZMYND11 region. The tract at residues 145-179 (PVPAETASKDGVSCSDEDEKPRKRRRTNSSSSSPV) is disordered. T171 bears the Phosphothreonine mark. A phosphoserine mark is found at S173 and S177. O-linked (GlcNAc) serine glycans are attached at residues S192 and S200. Position 202 is a phosphoserine (S202). O-linked (GlcNAc) threonine glycosylation occurs at T235. Over residues 364–406 (FPKQHQQSPKQQLQQVQQQTQQPVAQPSSVSQQQQPQQSALPP) the composition is skewed to low complexity. The disordered stretch occupies residues 364–407 (FPKQHQQSPKQQLQQVQQQTQQPVAQPSSVSQQQQPQQSALPPG). T465 and T470 each carry an O-linked (GlcNAc) threonine glycan. S521 carries O-linked (GlcNAc) serine glycosylation. The span at 660 to 671 (SRVADASNSSAQ) shows a compositional bias: polar residues. The disordered stretch occupies residues 660–700 (SRVADASNSSAQEGKEEPQGYTDSSSSSTESSQSSQDSQPV). Residues 681–698 (TDSSSSSTESSQSSQDSQ) are compositionally biased toward low complexity. Residues S782 and S785 each carry the phosphoserine modification. O-linked (GlcNAc) threonine glycosylation occurs at T1069. At S1085 the chain carries Phosphoserine. Residues 1232–1264 (QLDDDETAMEQDIDSSTEDGTEPSPSQSAVERS) form a disordered region. The segment covering 1233–1252 (LDDDETAMEQDIDSSTEDGT) has biased composition (acidic residues). The segment covering 1254-1264 (PSPSQSAVERS) has biased composition (polar residues).

In terms of assembly, homodimer. Interacts with the transactivation domain of BRCA2. Interacts with CBX1 (via chromoshadow domain). Interacts with ZMYND11. Does not interact with CBX3 or CBX5. Component of a nuclear receptor-mediated transcription complex composed of at least ZNF335, CCAR2 and EMSY; the complex stimulates the transcription of nuclear receptor target genes such as SOX9 and HOXA1. Within the complex interacts with CCAR2 and ZNF335. Components of this complex may associate with components of a histone methylation complex to form a complex at least composed of ZNF335, HCFC1, CCAR2, EMSY, MKI67, RBBP5, ASH2L and WDR5. Within this complex, interacts with ASH2L and RBBP5.

It is found in the nucleus. Functionally, regulator which is able to repress transcription, possibly via its interaction with a multiprotein chromatin remodeling complex that modifies the chromatin. Its interaction with BRCA2 suggests that it may play a central role in the DNA repair function of BRCA2. Mediates ligand-dependent transcriptional activation by nuclear hormone receptors. This is BRCA2-interacting transcriptional repressor EMSY from Mus musculus (Mouse).